Here is a 605-residue protein sequence, read N- to C-terminus: Arginine--tRNA ligase (605 aa).

The 'HIGH' region motif lies at 131 to 141 (ANPTGPMHVGH). A disordered region spans residues 290–309 (PPPKSKKGQPAPAQAASNSA). The segment covering 298–309 (QPAPAQAASNSA) has biased composition (low complexity).

This sequence belongs to the class-I aminoacyl-tRNA synthetase family. Monomer.

The protein localises to the cytoplasm. It carries out the reaction tRNA(Arg) + L-arginine + ATP = L-arginyl-tRNA(Arg) + AMP + diphosphate. The chain is Arginine--tRNA ligase from Anaeromyxobacter sp. (strain Fw109-5).